The primary structure comprises 517 residues: Ribonuclease Y (517 aa).

The chain crosses the membrane as a helical span at residues 1-21 (MIEFLIGLIAAVVGILVGYLI). The 65-residue stretch at 207–271 (LINVVNIKND…IAVRTVELLV (65 aa)) folds into the KH domain. One can recognise an HD domain in the interval 333–426 (ALIHSLEVAH…VCTADVLSAA (94 aa)).

Belongs to the RNase Y family.

The protein resides in the cell membrane. In terms of biological role, endoribonuclease that initiates mRNA decay. In Campylobacter hominis (strain ATCC BAA-381 / DSM 21671 / CCUG 45161 / LMG 19568 / NCTC 13146 / CH001A), this protein is Ribonuclease Y.